We begin with the raw amino-acid sequence, 205 residues long: Bacterial microcompartment protein trimer-1 (205 aa).

The interval 1-20 (MDHAPERFDATPPAGEPDRP) is disordered. 2 BMC domains span residues 21 to 106 (ALGV…RFLD) and 120 to 204 (SVII…GRLF).

The protein belongs to the bacterial microcompartments protein family. Homotrimerizes to form a pseudohexamer. Unlike its paralogs BMC-T2 and BMC-T3, the pseudohexamers do not stack. The concave side faces outward, with the N- and C-terminii exposed to the cytoplasm.

It is found in the bacterial microcompartment. A minor component of the bacterial microcompartment (BMC) shell. Expression of 5 proteins in E.coli (BMC-H (Hoch_5815), BMC-P (Hoch_5814), and 3 BMC-T (Hoch_5812, Hoch_5816, Hoch_3341)) forms 40 nm artificial BMCs with a molecular mass of 6.5 MDa. This protein does not form stacked pseudohexamers in the BMC. There are 20 BMC-T pseudohexamers per BMC, composed of mixed BMC-T1, BMC-T2 and BMC-T3. The shell facets are 20-30 Angstroms thick, with 1 of BMC-T trimers protruding to the exterior. The protein is Bacterial microcompartment protein trimer-1 of Haliangium ochraceum (strain DSM 14365 / JCM 11303 / SMP-2).